The following is a 393-amino-acid chain: DNA-directed RNA polymerase subunit Rpo1C (393 aa).

The protein belongs to the RNA polymerase beta' chain family. In terms of assembly, part of the RNA polymerase complex.

It is found in the cytoplasm. It carries out the reaction RNA(n) + a ribonucleoside 5'-triphosphate = RNA(n+1) + diphosphate. Its function is as follows. DNA-dependent RNA polymerase (RNAP) catalyzes the transcription of DNA into RNA using the four ribonucleoside triphosphates as substrates. Forms part of the jaw domain. This Thermococcus celer protein is DNA-directed RNA polymerase subunit Rpo1C.